The primary structure comprises 717 residues: Ribosomal RNA large subunit methyltransferase K/L (717 aa).

The 112-residue stretch at 44–155 (DAYKVCIYSY…KQFVNVFLCL (112 aa)) folds into the THUMP domain.

The protein belongs to the methyltransferase superfamily. RlmKL family.

The protein resides in the cytoplasm. The catalysed reaction is guanosine(2445) in 23S rRNA + S-adenosyl-L-methionine = N(2)-methylguanosine(2445) in 23S rRNA + S-adenosyl-L-homocysteine + H(+). The enzyme catalyses guanosine(2069) in 23S rRNA + S-adenosyl-L-methionine = N(2)-methylguanosine(2069) in 23S rRNA + S-adenosyl-L-homocysteine + H(+). In terms of biological role, specifically methylates the guanine in position 2445 (m2G2445) and the guanine in position 2069 (m7G2069) of 23S rRNA. The protein is Ribosomal RNA large subunit methyltransferase K/L of Francisella tularensis subsp. tularensis (strain WY96-3418).